Here is a 188-residue protein sequence, read N- to C-terminus: Elongation factor P-like protein (188 aa).

It belongs to the elongation factor P family.

This is Elongation factor P-like protein from Xylella fastidiosa (strain 9a5c).